Here is a 406-residue protein sequence, read N- to C-terminus: Sorting nexin-6 (406 aa).

At Met-1 the chain carries N-acetylmethionine. At Met-2 the chain carries N-acetylmethionine; in Sorting nexin-6, N-terminally processed. Positions 2–179 (MEGLDDGPDF…NQDLSVRGKN (178 aa)) are interaction with PIM1. In terms of domain architecture, PX spans 26-173 (LQSDAALQVD…HVFLEYNQDL (148 aa)). Residues 41-47 (SERDKVK), 100-106 (FDASREK), and 114-117 (EGSM) each bind a 1,2-diacyl-sn-glycero-3-phospho-(1D-myo-inositol-4,5-bisphosphate). Phosphoserine is present on residues Ser-116 and Ser-194. The tract at residues 182–199 (EKLEDFFKNMVKSADGVI) is membrane-binding amphipathic helix. The 204-residue stretch at 203-406 (VKDVDDFFEH…NCLAVLNGDT (204 aa)) folds into the BAR domain.

It belongs to the sorting nexin family. In terms of assembly, forms heterodimers with BAR domain-containing sorting nexins SNX1 and SNX2. The heterodimers are proposed to self-assemble into helical arrays on the membrane to stabilize and expand local membrane curvature underlying endosomal tubule formation. Thought to be a component of the originally described retromer complex (also called SNX-BAR retromer) which is a pentamer containing the heterotrimeric retromer cargo-selective complex (CSC), also described as vacuolar protein sorting subcomplex (VPS), and a heterodimeric membrane-deforming subcomplex formed between SNX1 or SNX2 and SNX5 or SNX6 (also called SNX-BAR subcomplex); the respective CSC and SNX-BAR subcomplexes associate with low affinity. Interacts with SNX1, SNX2, VPS26A, VPS29, VPS35, TGFB receptors, BACE1, BRMS1, PIP5K1C. Interacts with DCTN1; the association with DCTN1 is involved in movement of retromer-c ontaining vesicles toward the TGN. Interacts with PIM1; translocating SNX6 to the nucleus. Interacts with CDKN1B and GIT1. In terms of processing, in vitro phosphorylated by PIM1; not affecting PIM1-dependent nuclear translocation.

It localises to the early endosome membrane. The protein localises to the cytoplasmic vesicle. It is found in the cytoplasm. The protein resides in the nucleus. In terms of biological role, involved in several stages of intracellular trafficking. Interacts with membranes phosphatidylinositol 3,4-bisphosphate and/or phosphatidylinositol 4,5-bisphosphate. Acts in part as component of the retromer membrane-deforming SNX-BAR subcomplex. The SNX-BAR retromer mediates retrograde transport of cargo proteins from endosomes to the trans-Golgi network (TGN) and is involved in endosome-to-plasma membrane transport for cargo protein recycling. The SNX-BAR subcomplex functions to deform the donor membrane into a tubular profile called endosome-to-TGN transport carrier (ETC). Does not have in vitro vesicle-to-membrane remodeling activity. Involved in retrograde endosome-to-TGN transport of lysosomal enzyme receptor IGF2R. May function as link between transport vesicles and dynactin. Negatively regulates retrograde transport of BACE1 from the cell surface to the trans-Golgi network. Involved in E-cadherin sorting and degradation; inhibits PIP5K1C-mediated E-cadherin degradation. In association with GIT1 involved in EGFR degradation. Promotes lysosomal degradation of CDKN1B. May contribute to transcription regulation. In Pongo abelii (Sumatran orangutan), this protein is Sorting nexin-6 (SNX6).